Consider the following 272-residue polypeptide: Shikimate dehydrogenase (NADP(+)) (272 aa).

Shikimate is bound by residues S14–S16 and T61. K65 (proton acceptor) is an active-site residue. E77 provides a ligand contact to NADP(+). Residues N86 and D102 each coordinate shikimate. NADP(+) contacts are provided by residues G126 to A130, N149 to R154, and M213. Y215 is a shikimate binding site. G237 contacts NADP(+).

It belongs to the shikimate dehydrogenase family. As to quaternary structure, homodimer.

It catalyses the reaction shikimate + NADP(+) = 3-dehydroshikimate + NADPH + H(+). The protein operates within metabolic intermediate biosynthesis; chorismate biosynthesis; chorismate from D-erythrose 4-phosphate and phosphoenolpyruvate: step 4/7. Its function is as follows. Involved in the biosynthesis of the chorismate, which leads to the biosynthesis of aromatic amino acids. Catalyzes the reversible NADPH linked reduction of 3-dehydroshikimate (DHSA) to yield shikimate (SA). In Enterobacter sp. (strain 638), this protein is Shikimate dehydrogenase (NADP(+)).